The sequence spans 39 residues: Large ribosomal subunit protein bL36 (39 aa).

This sequence belongs to the bacterial ribosomal protein bL36 family.

The protein is Large ribosomal subunit protein bL36 of Pediococcus pentosaceus (strain ATCC 25745 / CCUG 21536 / LMG 10740 / 183-1w).